Reading from the N-terminus, the 382-residue chain is tRNA (guanine(26)-N(2))-dimethyltransferase (382 aa).

Residues 4 to 373 (VEIIEGKARI…KNLDEIKECI (370 aa)) enclose the Trm1 methyltransferase domain. The S-adenosyl-L-methionine site is built by arginine 44, arginine 69, and aspartate 87. 4 residues coordinate Zn(2+): cysteine 246, cysteine 249, cysteine 263, and cysteine 266.

This sequence belongs to the class I-like SAM-binding methyltransferase superfamily. Trm1 family.

It catalyses the reaction guanosine(26) in tRNA + 2 S-adenosyl-L-methionine = N(2)-dimethylguanosine(26) in tRNA + 2 S-adenosyl-L-homocysteine + 2 H(+). In terms of biological role, dimethylates a single guanine residue at position 26 of a number of tRNAs using S-adenosyl-L-methionine as donor of the methyl groups. The protein is tRNA (guanine(26)-N(2))-dimethyltransferase of Sulfolobus acidocaldarius (strain ATCC 33909 / DSM 639 / JCM 8929 / NBRC 15157 / NCIMB 11770).